Here is a 102-residue protein sequence, read N- to C-terminus: Small ribosomal subunit protein bS18 (102 aa).

It belongs to the bacterial ribosomal protein bS18 family. As to quaternary structure, part of the 30S ribosomal subunit. Forms a tight heterodimer with protein bS6.

In terms of biological role, binds as a heterodimer with protein bS6 to the central domain of the 16S rRNA, where it helps stabilize the platform of the 30S subunit. The chain is Small ribosomal subunit protein bS18 from Orientia tsutsugamushi (strain Ikeda) (Rickettsia tsutsugamushi).